A 114-amino-acid chain; its full sequence is T cell receptor beta variable 25-1 (114 aa).

The first 21 residues, 1-21 (MTIRLLCYVGFYFLGAGLMEA), serve as a signal peptide directing secretion. One can recognise an Ig-like domain in the interval 22–114 (DIYQTPRYLV…TSQYLCASSE (93 aa)). Cys42 and Cys110 are disulfide-bonded. A glycan (N-linked (GlcNAc...) asparagine) is linked at Asn72.

As to quaternary structure, alpha-beta TR is a heterodimer composed of an alpha and beta chain; disulfide-linked. The alpha-beta TR is associated with the transmembrane signaling CD3 coreceptor proteins to form the TR-CD3 (TcR or TCR). The assembly of alpha-beta TR heterodimers with CD3 occurs in the endoplasmic reticulum where a single alpha-beta TR heterodimer associates with one CD3D-CD3E heterodimer, one CD3G-CD3E heterodimer and one CD247 homodimer forming a stable octameric structure. CD3D-CD3E and CD3G-CD3E heterodimers preferentially associate with TR alpha and TR beta chains, respectively. The association of the CD247 homodimer is the last step of TcR assembly in the endoplasmic reticulum and is required for transport to the cell surface.

The protein resides in the cell membrane. Functionally, v region of the variable domain of T cell receptor (TR) beta chain that participates in the antigen recognition. Alpha-beta T cell receptors are antigen specific receptors which are essential to the immune response and are present on the cell surface of T lymphocytes. Recognize peptide-major histocompatibility (MH) (pMH) complexes that are displayed by antigen presenting cells (APC), a prerequisite for efficient T cell adaptive immunity against pathogens. Binding of alpha-beta TR to pMH complex initiates TR-CD3 clustering on the cell surface and intracellular activation of LCK that phosphorylates the ITAM motifs of CD3G, CD3D, CD3E and CD247 enabling the recruitment of ZAP70. In turn ZAP70 phosphorylates LAT, which recruits numerous signaling molecules to form the LAT signalosome. The LAT signalosome propagates signal branching to three major signaling pathways, the calcium, the mitogen-activated protein kinase (MAPK) kinase and the nuclear factor NF-kappa-B (NF-kB) pathways, leading to the mobilization of transcription factors that are critical for gene expression and essential for T cell growth and differentiation. The T cell repertoire is generated in the thymus, by V-(D)-J rearrangement. This repertoire is then shaped by intrathymic selection events to generate a peripheral T cell pool of self-MH restricted, non-autoaggressive T cells. Post-thymic interaction of alpha-beta TR with the pMH complexes shapes TR structural and functional avidity. This Homo sapiens (Human) protein is T cell receptor beta variable 25-1.